The chain runs to 196 residues: dTDP-4-dehydro-6-deoxyglucose 3-epimerase (196 aa).

Substrate is bound by residues R21, E26, Q45–N47, and R57. H60 serves as the catalytic Proton acceptor. The substrate site is built by K70 and R117. The active-site Proton donor is the Y130. Residues E141 and R166 each coordinate substrate.

This sequence belongs to the dTDP-4-dehydrorhamnose 3,5-epimerase family. As to quaternary structure, homodimer.

The catalysed reaction is dTDP-4-dehydro-6-deoxy-alpha-D-glucose = dTDP-4-dehydro-6-deoxy-alpha-D-allose. It functions in the pathway antibiotic biosynthesis. Involved in the biosynthesis of dTDP-6-deoxy-D-allose, an intermediate in the biosynthesis of mycinose, which is one of the two unusual sugars attached to the 16-membered macrolactone ring of the aglycone antibiotic chalcomycin. Catalyzes the conversion of dTDP-4-oxo-6-deoxyglucose to dTDP-4-oxo-6-deoxyallose, via a C-3 epimerization. This chain is dTDP-4-dehydro-6-deoxyglucose 3-epimerase, found in Streptomyces bikiniensis.